The following is a 271-amino-acid chain: Shikimate kinase (271 aa).

Residue Pro83–Ala93 participates in ATP binding.

It belongs to the GHMP kinase family. Archaeal shikimate kinase subfamily.

It is found in the cytoplasm. It carries out the reaction shikimate + ATP = 3-phosphoshikimate + ADP + H(+). Its pathway is metabolic intermediate biosynthesis; chorismate biosynthesis; chorismate from D-erythrose 4-phosphate and phosphoenolpyruvate: step 5/7. The chain is Shikimate kinase from Thermococcus kodakarensis (strain ATCC BAA-918 / JCM 12380 / KOD1) (Pyrococcus kodakaraensis (strain KOD1)).